A 335-amino-acid chain; its full sequence is Nucleoid-associated protein YejK (335 aa).

It belongs to the YejK family.

The protein resides in the cytoplasm. Its subcellular location is the nucleoid. The polypeptide is Nucleoid-associated protein YejK (Salmonella enteritidis PT4 (strain P125109)).